A 316-amino-acid polypeptide reads, in one-letter code: Probable cobalamin biosynthesis protein CobD (316 aa).

The next 5 membrane-spanning stretches (helical) occupy residues 1-21 (MITE…DIVL), 50-70 (ISGM…GFAL), 89-109 (ILAL…KSLI), 165-185 (PLFY…ALAF), and 294-314 (ISLI…LLIL).

Belongs to the CobD/CbiB family.

It localises to the cell membrane. Its pathway is cofactor biosynthesis; adenosylcobalamin biosynthesis. Functionally, converts cobyric acid to cobinamide by the addition of aminopropanol on the F carboxylic group. In Methanothrix thermoacetophila (strain DSM 6194 / JCM 14653 / NBRC 101360 / PT) (Methanosaeta thermophila), this protein is Probable cobalamin biosynthesis protein CobD.